The chain runs to 201 residues: MSNLVKEKAPVFPISKVKKIAKCDPEYVITSNVAISATAFAAELFVQNLVEESLVLAQLNSKGKTSLRLSLNSIEECVEKRDNFRFLEDAIKQLKKNSALDKKRELNMQPGRSDQEVVIEEPELHEDDGVEEEEEEDEVSEEEEPVHNEELLDDSKDQQNDKSTRSVASLLSRFQYKSALDVGEHSDSSDIEVDHTKSTDP.

Disordered stretches follow at residues lysine 102–arginine 165 and serine 178–proline 201. Residues valine 117–glutamate 144 show a composition bias toward acidic residues. Basic and acidic residues-rich tracts occupy residues proline 145–threonine 164 and valine 182–proline 201. Serine 186, serine 188, and serine 189 each carry phosphoserine.

In terms of assembly, DNA polymerase epsilon is a heterotetramer consisting of POL2, DPB2, DPB3 and DPB4.

It is found in the nucleus. In terms of biological role, as accessory component of the DNA polymerase epsilon (DNA polymerase II) participates in chromosomal DNA replication. It is required during synthesis of the leading and lagging DNA strands at the replication fork and binds at/or near replication origins and moves along DNA with the replication fork. It has 3'-5' proofreading exonuclease activity that correct errors arising during DNA replication. It is also involved in DNA synthesis during DNA repair. This Saccharomyces cerevisiae (strain ATCC 204508 / S288c) (Baker's yeast) protein is DNA polymerase epsilon subunit C (DPB3).